The chain runs to 243 residues: Orotidine 5'-phosphate decarboxylase (243 aa).

Residues D16, K38, D65–T74, T120, R181, Q190, G210, and R211 contribute to the substrate site. Catalysis depends on K67, which acts as the Proton donor.

Belongs to the OMP decarboxylase family. Type 1 subfamily. Homodimer.

It catalyses the reaction orotidine 5'-phosphate + H(+) = UMP + CO2. Its pathway is pyrimidine metabolism; UMP biosynthesis via de novo pathway; UMP from orotate: step 2/2. Catalyzes the decarboxylation of orotidine 5'-monophosphate (OMP) to uridine 5'-monophosphate (UMP). In Bradyrhizobium sp. (strain ORS 278), this protein is Orotidine 5'-phosphate decarboxylase.